We begin with the raw amino-acid sequence, 162 residues long: NADH-quinone oxidoreductase subunit I (162 aa).

2 consecutive 4Fe-4S ferredoxin-type domains span residues 54 to 83 (RRYE…INST) and 93 to 122 (SSYE…ETNI). Residues Cys63, Cys66, Cys69, Cys73, Cys102, Cys105, Cys108, and Cys112 each contribute to the [4Fe-4S] cluster site.

This sequence belongs to the complex I 23 kDa subunit family. NDH-1 is composed of 14 different subunits. Subunits NuoA, H, J, K, L, M, N constitute the membrane sector of the complex. [4Fe-4S] cluster is required as a cofactor.

The protein localises to the cell inner membrane. It carries out the reaction a quinone + NADH + 5 H(+)(in) = a quinol + NAD(+) + 4 H(+)(out). Its function is as follows. NDH-1 shuttles electrons from NADH, via FMN and iron-sulfur (Fe-S) centers, to quinones in the respiratory chain. The immediate electron acceptor for the enzyme in this species is believed to be ubiquinone. Couples the redox reaction to proton translocation (for every two electrons transferred, four hydrogen ions are translocated across the cytoplasmic membrane), and thus conserves the redox energy in a proton gradient. The polypeptide is NADH-quinone oxidoreductase subunit I (Francisella tularensis subsp. holarctica (strain FTNF002-00 / FTA)).